The sequence spans 496 residues: Glutamyl-tRNA(Gln) amidotransferase subunit A (496 aa).

Catalysis depends on charge relay system residues Lys75 and Ser150. Residue Ser174 is the Acyl-ester intermediate of the active site.

Belongs to the amidase family. GatA subfamily. As to quaternary structure, heterotrimer of A, B and C subunits.

It catalyses the reaction L-glutamyl-tRNA(Gln) + L-glutamine + ATP + H2O = L-glutaminyl-tRNA(Gln) + L-glutamate + ADP + phosphate + H(+). Its function is as follows. Allows the formation of correctly charged Gln-tRNA(Gln) through the transamidation of misacylated Glu-tRNA(Gln) in organisms which lack glutaminyl-tRNA synthetase. The reaction takes place in the presence of glutamine and ATP through an activated gamma-phospho-Glu-tRNA(Gln). The chain is Glutamyl-tRNA(Gln) amidotransferase subunit A from Burkholderia pseudomallei (strain 668).